Here is a 406-residue protein sequence, read N- to C-terminus: Argininosuccinate synthase (406 aa).

ATP-binding positions include 11–19 (AYSGGLDTS) and alanine 38. L-citrulline is bound by residues tyrosine 91 and serine 96. Glycine 121 lines the ATP pocket. L-aspartate is bound by residues threonine 123, asparagine 127, and aspartate 128. An L-citrulline-binding site is contributed by asparagine 127. L-citrulline contacts are provided by arginine 131, serine 181, serine 190, glutamate 266, and tyrosine 278.

It belongs to the argininosuccinate synthase family. Type 1 subfamily. Homotetramer.

It localises to the cytoplasm. It carries out the reaction L-citrulline + L-aspartate + ATP = 2-(N(omega)-L-arginino)succinate + AMP + diphosphate + H(+). The protein operates within amino-acid biosynthesis; L-arginine biosynthesis; L-arginine from L-ornithine and carbamoyl phosphate: step 2/3. This Campylobacter hominis (strain ATCC BAA-381 / DSM 21671 / CCUG 45161 / LMG 19568 / NCTC 13146 / CH001A) protein is Argininosuccinate synthase.